Consider the following 267-residue polypeptide: Sulfur carrier protein FdhD (267 aa).

Residue Cys108 is the Cysteine persulfide intermediate of the active site.

The protein belongs to the FdhD family.

It is found in the cytoplasm. Required for formate dehydrogenase (FDH) activity. Acts as a sulfur carrier protein that transfers sulfur from IscS to the molybdenum cofactor prior to its insertion into FDH. The polypeptide is Sulfur carrier protein FdhD (Shouchella clausii (strain KSM-K16) (Alkalihalobacillus clausii)).